Consider the following 213-residue polypeptide: Imidazole glycerol phosphate synthase subunit HisH (213 aa).

The Glutamine amidotransferase type-1 domain occupies 8–213 (TVALIDYGAG…FLSRFLDWNP (206 aa)). C91 (nucleophile) is an active-site residue. Catalysis depends on residues H193 and E195.

As to quaternary structure, heterodimer of HisH and HisF.

The protein resides in the cytoplasm. The enzyme catalyses 5-[(5-phospho-1-deoxy-D-ribulos-1-ylimino)methylamino]-1-(5-phospho-beta-D-ribosyl)imidazole-4-carboxamide + L-glutamine = D-erythro-1-(imidazol-4-yl)glycerol 3-phosphate + 5-amino-1-(5-phospho-beta-D-ribosyl)imidazole-4-carboxamide + L-glutamate + H(+). It carries out the reaction L-glutamine + H2O = L-glutamate + NH4(+). It functions in the pathway amino-acid biosynthesis; L-histidine biosynthesis; L-histidine from 5-phospho-alpha-D-ribose 1-diphosphate: step 5/9. In terms of biological role, IGPS catalyzes the conversion of PRFAR and glutamine to IGP, AICAR and glutamate. The HisH subunit catalyzes the hydrolysis of glutamine to glutamate and ammonia as part of the synthesis of IGP and AICAR. The resulting ammonia molecule is channeled to the active site of HisF. The chain is Imidazole glycerol phosphate synthase subunit HisH from Zymomonas mobilis subsp. mobilis (strain ATCC 31821 / ZM4 / CP4).